We begin with the raw amino-acid sequence, 515 residues long: Vesicular acetylcholine transporter (515 aa).

Residues 1 to 40 (MGVTMAVGLAKAAMGKISSAIGERSKRISGAMNEPRRKRK) lie on the Cytoplasmic side of the membrane. Residues 41-61 (ILLVIVCIAMLLDNMLYMVIV) traverse the membrane as a helical segment. At 62–112 (PIIPNYLETIRTYKLVYITTPSNGTNGSLLNSTQRAVLERNPNANEDIQIG) the chain is on the lumenal, vesicle side. N-linked (GlcNAc...) asparagine glycans are attached at residues Asn-84, Asn-87, and Asn-92. Residues 113-133 (VLFASKAILQLLSNPFTGTFI) form a helical membrane-spanning segment. The Cytoplasmic segment spans residues 134 to 139 (DRVGYD). Residues 140 to 160 (IPLLIGLTIMFFSTITFAFGE) traverse the membrane as a helical segment. Residues 161–169 (SYAVLFAAR) are Lumenal, vesicle-facing. Residues 170–190 (SLQGLGSAFADTSGIAMIADK) traverse the membrane as a helical segment. The Cytoplasmic portion of the chain corresponds to 191-201 (YTEESERTQAL). Residues 202 to 222 (GIALAFISFGSLVAPPFGGVL) form a helical membrane-spanning segment. The Lumenal, vesicle portion of the chain corresponds to 223 to 229 (YQFAGKW). A helical membrane pass occupies residues 230-250 (VPFLVLSFVCLLDGILLLMVV). Topologically, residues 251-271 (TPFASRTRENMLQGTPIYKLM) are cytoplasmic. Residues 272–292 (IDPYIAVVAGALTTCNIPLAF) form a helical membrane-spanning segment. The Lumenal, vesicle portion of the chain corresponds to 293 to 310 (LEPTISNWMKKTMNASEW). N-linked (GlcNAc...) asparagine glycosylation occurs at Asn-306. Residues 311 to 331 (QMGITWLPAFFPHILGVYITV) form a helical membrane-spanning segment. Residues 332–341 (KLAAKYPNYQ) lie on the Cytoplasmic side of the membrane. Residues 342–362 (WFYGAVGLVIIGASSCTIPAC) form a helical membrane-spanning segment. Topologically, residues 363 to 367 (RNFEE) are lumenal, vesicle. Residues 368-388 (LIIPLCALCFGIALVDTALLP) form a helical membrane-spanning segment. Topologically, residues 389 to 404 (TLAFLVDIRYVSVYGS) are cytoplasmic. A helical membrane pass occupies residues 405–425 (VYAIADISYSVAYALGPIMAG). Residues 426–432 (QIVHDLG) lie on the Lumenal, vesicle side of the membrane. A helical membrane pass occupies residues 433–453 (FVQLNLGMGLVNILYAPALLF). Residues 454 to 515 (LRNVCQMKPS…VLSDQEGYSE (62 aa)) lie on the Cytoplasmic side of the membrane. The segment at 489-515 (AAKEPHGSSSGNHSVHAVLSDQEGYSE) is disordered.

This sequence belongs to the major facilitator superfamily. Vesicular transporter family. As to expression, electric lobe.

The protein resides in the membrane. Functionally, involved in acetylcholine transport into synaptic vesicles. The protein is Vesicular acetylcholine transporter of Tetronarce californica (Pacific electric ray).